Here is a 131-residue protein sequence, read N- to C-terminus: Small ribosomal subunit protein bS6 (131 aa).

Residues 96 to 131 (VTEASPMVKAKDERRERRDDFANETADDAEAGDSEE) are disordered. Residues 104-116 (KAKDERRERRDDF) show a composition bias toward basic and acidic residues. The segment covering 120 to 131 (TADDAEAGDSEE) has biased composition (acidic residues).

This sequence belongs to the bacterial ribosomal protein bS6 family.

In terms of biological role, binds together with bS18 to 16S ribosomal RNA. In Salmonella arizonae (strain ATCC BAA-731 / CDC346-86 / RSK2980), this protein is Small ribosomal subunit protein bS6.